Here is a 367-residue protein sequence, read N- to C-terminus: Biotin synthase (367 aa).

Residues 67–291 (NAVQISTLLS…IAVTRICCPS (225 aa)) enclose the Radical SAM core domain. Cys-82, Cys-86, and Cys-89 together coordinate [4Fe-4S] cluster. [2Fe-2S] cluster-binding residues include Cys-128, Cys-159, Cys-219, and Arg-295.

This sequence belongs to the radical SAM superfamily. Biotin synthase family. As to quaternary structure, homodimer. The cofactor is [4Fe-4S] cluster. Requires [2Fe-2S] cluster as cofactor.

The catalysed reaction is (4R,5S)-dethiobiotin + (sulfur carrier)-SH + 2 reduced [2Fe-2S]-[ferredoxin] + 2 S-adenosyl-L-methionine = (sulfur carrier)-H + biotin + 2 5'-deoxyadenosine + 2 L-methionine + 2 oxidized [2Fe-2S]-[ferredoxin]. Its pathway is cofactor biosynthesis; biotin biosynthesis; biotin from 7,8-diaminononanoate: step 2/2. Catalyzes the conversion of dethiobiotin (DTB) to biotin by the insertion of a sulfur atom into dethiobiotin via a radical-based mechanism. The sequence is that of Biotin synthase from Psychrobacter sp. (strain PRwf-1).